The following is a 118-amino-acid chain: uncharacterized protein (118 aa).

Residues 1 to 118 (MASARGAKQS…AARQNEKTAR (118 aa)) form a disordered region. Residues 13–28 (RVGTTRYTETSTVRVE) show a composition bias toward low complexity. The segment covering 29 to 49 (TSSHRVETSSRRVETSQRRSE) has biased composition (basic and acidic residues).

This is an uncharacterized protein from Homo sapiens (Human).